The primary structure comprises 546 residues: Fusion glycoprotein F0 (546 aa).

Residues 1 to 26 (MATQEVRLKCLLCGIIVLVLSLEGLG) form the signal peptide. Topologically, residues 27–494 (ILHYEKLSKI…NPSLISMLSM (468 aa)) are extracellular. Residues Asn64, Asn67, and Asn99 are each glycosylated (N-linked (GlcNAc...) asparagine; by host). The segment at 110 to 134 (LAGVVMAGIAIGIATAAQITAGVAL) is fusion peptide. Residues 135 to 163 (YEAMKNADNINKLKSSIESTNEAVVKLQE) adopt a coiled-coil conformation. 4 cysteine pairs are disulfide-bonded: Cys331–Cys340, Cys355–Cys363, Cys387–Cys392, and Cys394–Cys417. Asn414 and Asn464 each carry an N-linked (GlcNAc...) asparagine; by host glycan. Positions 459–484 (QISSMNQSLQQSKDYIKEAQKILDTV) form a coiled coil. The helical transmembrane segment at 495–515 (IILYVLSIAALCIGLITFISF) threads the bilayer. Residues 516–546 (VIVEKKRGNYSRLDDRQVRPVSNGDLYYIGT) lie on the Cytoplasmic side of the membrane.

Belongs to the paramyxoviruses fusion glycoprotein family. As to quaternary structure, homotrimer of disulfide-linked F1-F2. Post-translationally, the inactive precursor F0 is glycosylated and proteolytically cleaved into F1 and F2 to be functionally active. The cleavage is mediated by cellular proteases during the transport and maturation of the polypeptide.

The protein resides in the virion membrane. It localises to the host cell membrane. Functionally, class I viral fusion protein. Under the current model, the protein has at least 3 conformational states: pre-fusion native state, pre-hairpin intermediate state, and post-fusion hairpin state. During viral and plasma cell membrane fusion, the heptad repeat (HR) regions assume a trimer-of-hairpins structure, positioning the fusion peptide in close proximity to the C-terminal region of the ectodomain. The formation of this structure appears to drive apposition and subsequent fusion of viral and plasma cell membranes. Directs fusion of viral and cellular membranes leading to delivery of the nucleocapsid into the cytoplasm. This fusion is pH independent and occurs directly at the outer cell membrane. The trimer of F1-F2 (F protein) probably interacts with G at the virion surface. Upon G binding to its cellular receptor, the hydrophobic fusion peptide is unmasked and interacts with the cellular membrane, inducing the fusion between cell and virion membranes. Later in infection, F proteins expressed at the plasma membrane of infected cells could mediate fusion with adjacent cells to form syncytia, a cytopathic effect that could lead to tissue necrosis. This is Fusion glycoprotein F0 (F) from Hendra virus (isolate Horse/Autralia/Hendra/1994).